Reading from the N-terminus, the 488-residue chain is DNA polymerase II small subunit (488 aa).

This sequence belongs to the DNA polymerase delta/II small subunit family. In terms of assembly, heterodimer of a large subunit and a small subunit.

It carries out the reaction DNA(n) + a 2'-deoxyribonucleoside 5'-triphosphate = DNA(n+1) + diphosphate. The catalysed reaction is Exonucleolytic cleavage in the 3'- to 5'-direction to yield nucleoside 5'-phosphates.. Functionally, possesses two activities: a DNA synthesis (polymerase) and an exonucleolytic activity that degrades single-stranded DNA in the 3' to 5' direction. Has a template-primer preference which is characteristic of a replicative DNA polymerase. The polypeptide is DNA polymerase II small subunit (polB) (Thermoplasma acidophilum (strain ATCC 25905 / DSM 1728 / JCM 9062 / NBRC 15155 / AMRC-C165)).